The primary structure comprises 239 residues: Increased recombination centers protein 22-1 (239 aa).

A signal peptide spans 1–19 (MKLSTIFTAFAATIATVAG). The Lumenal portion of the chain corresponds to 20–161 (YETTGSKQTV…AAVSFFDPRL (142 aa)). A helical membrane pass occupies residues 162–182 (IFLELVLLITFAGLIYVGYEI). Topologically, residues 183-239 (WGKQYFKGVASVKAKKVSAAKASSPVASGPSTTSATGYDTNWIPESHLKQKKTKKVN) are cytoplasmic. A compositionally biased stretch (low complexity) spans 201–213 (AAKASSPVASGPS). The tract at residues 201–222 (AAKASSPVASGPSTTSATGYDT) is disordered.

This sequence belongs to the IRC22 family.

It localises to the endoplasmic reticulum membrane. Functionally, is probably involved in a pathway contributing to genomic integrity. The protein is Increased recombination centers protein 22-1 (IRC22-1) of Candida albicans (strain WO-1) (Yeast).